Reading from the N-terminus, the 310-residue chain is Ribose-phosphate pyrophosphokinase (310 aa).

ATP contacts are provided by residues 33–35 (DGE) and 92–93 (RQ). Residues His127 and Asp166 each coordinate Mg(2+). Residue Lys189 is part of the active site. D-ribose 5-phosphate contacts are provided by residues Arg191, Asp215, and 219-223 (DTAGT).

Belongs to the ribose-phosphate pyrophosphokinase family. Class I subfamily. As to quaternary structure, homohexamer. It depends on Mg(2+) as a cofactor.

It is found in the cytoplasm. The enzyme catalyses D-ribose 5-phosphate + ATP = 5-phospho-alpha-D-ribose 1-diphosphate + AMP + H(+). It participates in metabolic intermediate biosynthesis; 5-phospho-alpha-D-ribose 1-diphosphate biosynthesis; 5-phospho-alpha-D-ribose 1-diphosphate from D-ribose 5-phosphate (route I): step 1/1. Functionally, involved in the biosynthesis of the central metabolite phospho-alpha-D-ribosyl-1-pyrophosphate (PRPP) via the transfer of pyrophosphoryl group from ATP to 1-hydroxyl of ribose-5-phosphate (Rib-5-P). In Bordetella parapertussis (strain 12822 / ATCC BAA-587 / NCTC 13253), this protein is Ribose-phosphate pyrophosphokinase.